Reading from the N-terminus, the 211-residue chain is Large ribosomal subunit protein uL3 (211 aa).

This sequence belongs to the universal ribosomal protein uL3 family. In terms of assembly, part of the 50S ribosomal subunit. Forms a cluster with proteins L14 and L19.

One of the primary rRNA binding proteins, it binds directly near the 3'-end of the 23S rRNA, where it nucleates assembly of the 50S subunit. This Trichlorobacter lovleyi (strain ATCC BAA-1151 / DSM 17278 / SZ) (Geobacter lovleyi) protein is Large ribosomal subunit protein uL3.